Here is a 299-residue protein sequence, read N- to C-terminus: Non-homologous end joining protein Ku (299 aa).

The 179-residue stretch at 10–188 (ISFGLVHIPV…TEAVTDARLT (179 aa)) folds into the Ku domain. Disordered stretches follow at residues 227-249 (AGEG…SADV) and 261-299 (AGKS…GKAS). Residues 273–283 (AAKDKVADKQS) show a composition bias toward basic and acidic residues. Over residues 284–299 (PKPKRPAVRKKTGKAS) the composition is skewed to basic residues.

This sequence belongs to the prokaryotic Ku family. As to quaternary structure, homodimer. Interacts with LigD.

With LigD forms a non-homologous end joining (NHEJ) DNA repair enzyme, which repairs dsDNA breaks with reduced fidelity. Binds linear dsDNA with 5'- and 3'- overhangs but not closed circular dsDNA nor ssDNA. Recruits and stimulates the ligase activity of LigD. This chain is Non-homologous end joining protein Ku, found in Pseudomonas syringae pv. tomato (strain ATCC BAA-871 / DC3000).